A 695-amino-acid polypeptide reads, in one-letter code: Nucleoprotein (695 aa).

Coiled-coil stretches lie at residues 316–341 and 372–400; these read VNVG…RRHE and QTLA…EDQG. Disordered stretches follow at residues 426-458 and 472-611; these read RSIN…SFVD and TLEN…EDTR. A compositionally biased stretch (polar residues) spans 474 to 484; that stretch reads ENSVMAPSTTL. Positions 502-516 are enriched in basic and acidic residues; the sequence is ISQKKQGNESTDPAR. Positions 529–547 are enriched in acidic residues; that stretch reads QEDDESEYTTDSQESDDQP. A PTAP/PSAP motif motif is present at residues 603 to 606; sequence PSAP.

It belongs to the filoviruses nucleoprotein family. Homooligomer. Homomultimerizes to form the nucleocapsid. Binds to viral genomic RNA. Interacts with VP35 and VP30 to form the nucleocapsid. Also interacts with VP24 and VP40. Phosphorylated.

Its subcellular location is the virion. It is found in the host cytoplasm. In terms of biological role, encapsidates the genome, protecting it from nucleases. The encapsidated genomic RNA is termed the nucleocapsid and serves as template for transcription and replication. During replication, encapsidation by NP is coupled to RNA synthesis and all replicative products are resistant to nucleases. The chain is Nucleoprotein (NP) from Lake Victoria marburgvirus (strain Ravn-87) (MARV).